The primary structure comprises 634 residues: GTP-binding protein 4 (634 aa).

A2 carries the N-acetylalanine modification. An N6-acetyllysine; alternate modification is found at K103. K103 participates in a covalent cross-link: Glycyl lysine isopeptide (Lys-Gly) (interchain with G-Cter in SUMO2); alternate. Residue S122 is modified to Phosphoserine. Residues 169–340 (RTLLLCGYPN…VKTEACDRLL (172 aa)) form the OBG-type G domain. GTP contacts are provided by residues 175 to 182 (GYPNVGKS), 221 to 225 (DTPGI), and 289 to 292 (NKCD). A Glycyl lysine isopeptide (Lys-Gly) (interchain with G-Cter in SUMO2) cross-link involves residue K332. 3 positions are modified to phosphoserine: S468, S470, and S472. The segment at 494-634 (KILQSKEKNK…KRKAGKKDRR (141 aa)) is disordered. K534 is covalently cross-linked (Glycyl lysine isopeptide (Lys-Gly) (interchain with G-Cter in SUMO2)). Residues 544–554 (RRSRSVTRKRK) show a composition bias toward basic residues. S558 is modified (phosphoserine). Low complexity predominate over residues 560–572 (PPSSTARSRSCSR). Positions 573-585 (TPRDVSGLRDVKM) are enriched in basic and acidic residues. Basic residues predominate over residues 586-604 (VKKAKTMMKKAQKKMNRLG). The segment covering 605–618 (KKGEADRHVFDMKP) has biased composition (basic and acidic residues). Basic residues predominate over residues 619–634 (KHLLSGKRKAGKKDRR).

The protein belongs to the TRAFAC class OBG-HflX-like GTPase superfamily. OBG GTPase family. NOG subfamily. In terms of assembly, associates with pre-60S ribosomal particles. Interacts with MINAS-60 (product of an alternative open reading frame of RBM10). As to expression, ubiquitous.

Its subcellular location is the nucleus. The protein resides in the nucleolus. In terms of biological role, involved in the biogenesis of the 60S ribosomal subunit. Acts as TP53 repressor, preventing TP53 stabilization and cell cycle arrest. This Mus musculus (Mouse) protein is GTP-binding protein 4 (Gtpbp4).